Consider the following 1253-residue polypeptide: Structural polyprotein (1253 aa).

The segment at 43-77 (VQAQQMQQLISAVSALTTKQNGKAPKKPKKKPQKA) is host transcription inhibition. Residues 58-110 (LTTKQNGKAPKKPKKKPQKAKAKKNEQQKKNENKKPPPKQKNPAKKKKPGKRE) form a disordered region. Over residues 66–79 (APKKPKKKPQKAKA) the composition is skewed to basic residues. The short motif at 70–106 (PKKKPQKAKAKKNEQQKKNENKKPPPKQKNPAKKKKP) is the Nuclear localization signal element. Over residues 80 to 92 (KKNEQQKKNENKK) the composition is skewed to basic and acidic residues. The binding to the viral RNA stretch occupies residues 90-121 (NKKPPPKQKNPAKKKKPGKRERMCMKIENDCI). Basic residues predominate over residues 93–108 (PPPKQKNPAKKKKPGK). A ribosome-binding region spans residues 106-120 (PGKRERMCMKIENDC). C120 and C135 are disulfide-bonded. The region spanning 120-268 (CIFEVKLDGK…RYTPEGTEEW (149 aa)) is the Peptidase S3 domain. H146 serves as the catalytic Charge relay system. Residues 151-161 (IDNPDLAKLTY) carry the Nuclear export signal motif. Positions 162–167 (KKSSKY) are interaction with spike glycoprotein E2. D168 (charge relay system) is an active-site residue. Positions 190–200 (PEGHYNWHHGA) are dimerization of the capsid protein. S220 functions as the Charge relay system in the catalytic mechanism. The tract at residues 226–230 (DNKGR) is dimerization of the capsid protein. The tract at residues 269–280 (SAALMMCVLANV) is functions as an uncleaved signal peptide for the precursor of protein E3/E2. 3 disulfides stabilise this stretch: C275–C284, C289–C293, and C292–C324. An N-linked (GlcNAc...) asparagine; by host glycan is attached at N279. A glycan (N-linked (GlcNAc...) asparagine; by host) is linked at N325. Over 333-694 (SVTKHFNVYK…EIILYYYGLY (362 aa)) the chain is Extracellular. 6 cysteine pairs are disulfide-bonded: C351-C457, C354-C360, C423-C437, C485-C597, C533-C557, and C535-C552. Interaction with host Mxra8 receptor regions lie at residues 358-361 (QFCY) and 394-396 (HEH). Positions 516-519 (QSGN) are interaction with host Mxra8 receptor. N532 is a glycosylation site (N-linked (GlcNAc...) asparagine; by host). Positions 548–554 (TINSCKI) are interaction with host Mxra8 receptor. An N-linked (GlcNAc...) asparagine; by host glycan is attached at N594. A helical transmembrane segment spans residues 695–715 (PAATIAAVSAAGLAVVLSLLA). Over 716-754 (SCYMFATARRKCLTPYALTPGAVVPVTLGVLCCAPRAHA) the chain is Cytoplasmic. C717 carries the S-stearoyl cysteine; by host lipid modification. The segment at 722-726 (TARRK) is interaction with the capsid protein. A lipid anchor (S-stearoyl cysteine; by host) is attached at C727. The tract at residues 727 to 747 (CLTPYALTPGAVVPVTLGVLC) is transient transmembrane before p62-6K protein processing. Cysteines 727 and 748 form a disulfide. S-palmitoyl cysteine; by host attachment occurs at residues C747 and C748. The Extracellular segment spans residues 755 to 769 (ASFAESMAYLWDENQ). N-linked (GlcNAc...) asparagine; by host glycosylation occurs at N768. A helical membrane pass occupies residues 770-790 (TLFWLELATPLAAIIILVCCL). Topologically, residues 791–792 (KN) are cytoplasmic. A helical transmembrane segment spans residues 793–813 (LLCCCKPLSFLVLVSLGTPVV). 2 consecutive stretches face the extracellular side: residues 814–815 (KS) and 826–1227 (VGFP…WVQR). 4 disulfide bridges follow: C864/C929, C877/C909, C878/C911, and C883/C893. The segment at 899 to 916 (VYPFMWGGAYCFCDTENT) is E1 fusion peptide loop. 2 N-linked (GlcNAc...) asparagine; by host glycosylation sites follow: N956 and N1085. Disulfide bonds link C1074-C1086, C1116-C1191, C1121-C1195, and C1143-C1185. The helical transmembrane segment at 1228 to 1248 (VAGGLGGLTLAAVAVLILVTC) threads the bilayer. A lipid anchor (S-palmitoyl cysteine; by host) is attached at C1248. Residues 1249-1253 (VTMRR) lie on the Cytoplasmic side of the membrane.

As to quaternary structure, homodimer. Homomultimer. Interacts with host karyopherin KPNA4; this interaction allows the nuclear import of the viral capsid protein. Interacts with spike glycoprotein E2. Interacts with host IRAK1; the interaction leads to inhibition of IRAK1-dependent signaling. In terms of assembly, the precursor of protein E3/E2 and E1 form a heterodimer shortly after synthesis. Interacts with spike glycoprotein E2. The precursor of protein E3/E2 and E1 form a heterodimer shortly after synthesis. Processing of the precursor of protein E3/E2 into E2 and E3 results in a heterodimer of the spike glycoproteins E2 and E1. Spike at virion surface are constituted of a trimer of E2-E1 heterodimers. After target cell attachment and endocytosis, E1 change conformation to form homotrimers. Interacts with 6K protein. E1/E2 heterodimer interacts with host LDLR. As to quaternary structure, interacts with spike glycoprotein E1. Processing of the precursor of protein E3/E2 into E2 and E3 results in a heterodimer of the spike glycoproteins E2 and E1. Spike at virion surface are constituted of a trimer of E2-E1 heterodimers. Interacts with 6K protein. Interacts with host MXRA8; this interaction mediates virus entry. In terms of assembly, oligomer. Interacts with spike glycoprotein E1. Interacts with spike glycoprotein E2. In terms of processing, structural polyprotein: Specific enzymatic cleavages in vivo yield mature proteins. Capsid protein is auto-cleaved during polyprotein translation, unmasking a signal peptide at the N-terminus of the precursor of E3/E2. The remaining polyprotein is then targeted to the host endoplasmic reticulum, where host signal peptidase cleaves it into pE2, 6K and E1 proteins. pE2 is further processed to mature E3 and E2 by host furin in trans-Golgi vesicle. Palmitoylated via thioester bonds. These palmitoylations may induce disruption of the C-terminus transmembrane. This would result in the reorientation of E2 C-terminus from lumenal to cytoplasmic side. Post-translationally, N-glycosylated. In terms of processing, palmitoylated via thioester bonds.

It is found in the virion. Its subcellular location is the host cytoplasm. The protein localises to the host cell membrane. The protein resides in the host nucleus. It localises to the virion membrane. It is found in the host Golgi apparatus. Its subcellular location is the host trans-Golgi network. The protein localises to the host endoplasmic reticulum. The enzyme catalyses Autocatalytic release of the core protein from the N-terminus of the togavirus structural polyprotein by hydrolysis of a -Trp-|-Ser- bond.. Functionally, forms an icosahedral capsid with a T=4 symmetry composed of 240 copies of the capsid protein surrounded by a lipid membrane through which penetrate 80 spikes composed of trimers of E1-E2 heterodimers. The capsid protein binds to the viral RNA genome at a site adjacent to a ribosome binding site for viral genome translation following genome release. Possesses a protease activity that results in its autocatalytic cleavage from the nascent structural protein. Following its self-cleavage, the capsid protein transiently associates with ribosomes, and within several minutes the protein binds to viral RNA and rapidly assembles into icosahedric core particles. The resulting nucleocapsid eventually associates with the cytoplasmic domain of the spike glycoprotein E2 at the cell membrane, leading to budding and formation of mature virions. In case of infection, new virions attach to target cells and after clathrin-mediated endocytosis their membrane fuses with the host endosomal membrane. This leads to the release of the nucleocapsid into the cytoplasm, followed by an uncoating event necessary for the genomic RNA to become accessible. The uncoating might be triggered by the interaction of capsid proteins with ribosomes. Binding of ribosomes would release the genomic RNA since the same region is genomic RNA-binding and ribosome-binding. Specifically inhibits interleukin-1 receptor-associated kinase 1/IRAK1-dependent signaling during viral entry, representing a means by which the alphaviruses may evade innate immune detection and activation prior to viral gene expression. Its function is as follows. Provides the signal sequence for the translocation of the precursor of protein E3/E2 to the host endoplasmic reticulum. Furin-cleaved E3 remains associated with spike glycoprotein E1 and mediates pH protection of the latter during the transport via the secretory pathway. After virion release from the host cell, the assembly protein E3 is gradually released in the extracellular space. Plays a role in viral attachment to target host cell, by binding to the cell receptor MXRA8. The host LDLR may also act as a cell receptor for viral entry. Synthesized as a p62 precursor which is processed by furin at the cell membrane just before virion budding, giving rise to E2-E1 heterodimer. The p62-E1 heterodimer is stable, whereas E2-E1 is unstable and dissociate at low pH. p62 is processed at the last step, presumably to avoid E1 fusion activation before its final export to cell surface. E2 C-terminus contains a transitory transmembrane that would be disrupted by palmitoylation, resulting in reorientation of the C-terminal tail from lumenal to cytoplasmic side. This step is critical since E2 C-terminus is involved in budding by interacting with capsid proteins. This release of E2 C-terminus in cytoplasm occurs lately in protein export, and precludes premature assembly of particles at the endoplasmic reticulum membrane. In terms of biological role, acts as a viroporin that participates in virus glycoprotein processing and transport to the plasma membrane, cell permeabilization and budding of viral particles. Disrupts the calcium homeostasis of the cell, probably at the endoplasmic reticulum level. This leads to cytoplasmic calcium elevation. Because of its lipophilic properties, the 6K protein is postulated to influence the selection of lipids that interact with the transmembrane domains of the glycoproteins, which, in turn, affects the deformability of the bilayer required for the extreme curvature that occurs as budding proceeds. Present in low amount in virions, about 3% compared to viral glycoproteins. Functionally, class II viral fusion protein. Fusion activity is inactive as long as E1 is bound to E2 in mature virion. After virus attachment to target cell via host MXRA8 and endocytosis, acidification of the endosome induce dissociation of E1/E2 heterodimer and concomitant trimerization of the E1 subunits. This E1 trimer is fusion active, and promotes release of viral nucleocapsid in cytoplasm after endosome and viral membrane fusion. Efficient fusion requires the presence of cholesterol and sphingolipid in the target membrane. The sequence is that of Structural polyprotein from Aedes vexans (Inland floodwater mosquito).